The chain runs to 385 residues: Urotensin-2 receptor (385 aa).

Residues 1 to 53 (MALSLESTSFPMLAVSRSTASELPGGFNVSHNSSWTGPTDPSSLQDLVATGVI) lie on the Extracellular side of the membrane. N-linked (GlcNAc...) asparagine glycans are attached at residues asparagine 28 and asparagine 32. A helical membrane pass occupies residues 54–76 (GAVLSTMGVVGVVGNVYTLVVMC). Residues 77-86 (RFLRASASMY) lie on the Cytoplasmic side of the membrane. Residues 87-112 (VYVVNLALADLLYLLSIPFIVATYVT) form a helical membrane-spanning segment. At 113-123 (KDWHFGDVGCR) the chain is on the extracellular side. A disulfide bridge connects residues cysteine 122 and cysteine 198. A helical membrane pass occupies residues 124–145 (VLFSLDFLTMHASIFTLTIMSS). Topologically, residues 146–166 (ERYAAVLRPLDTVQRSKGYRK) are cytoplasmic. The helical transmembrane segment at 167–185 (LLALGTWLLALLLTLPMML) threads the bilayer. The Extracellular segment spans residues 186–208 (AIRLVRRGSKSLCLPAWGPRAHR). The helical transmembrane segment at 209–231 (TYLTLLFGTSIVGPGLVIGLLYI) threads the bilayer. At 232-257 (RLARAYWLSQQASFKQTRRLPNPRVL) the chain is on the cytoplasmic side. The helical transmembrane segment at 258-283 (YLILGIVLLFWACFLPFWLWQLLAQY) threads the bilayer. Residues 284–298 (HQAMPLTPETARIIN) lie on the Extracellular side of the membrane. The chain crosses the membrane as a helical span at residues 299-320 (YLTACLTYGNSCINPFLYTLLT). The Cytoplasmic segment spans residues 321–385 (KNYREYLRGR…SPVPPNGAFV (65 aa)).

Belongs to the G-protein coupled receptor 1 family.

The protein resides in the cell membrane. High affinity receptor for urotensin-2 and urotensin-2B. The activity of this receptor is mediated by a G-protein that activate a phosphatidylinositol-calcium second messenger system. The protein is Urotensin-2 receptor (Uts2r) of Mus musculus (Mouse).